A 98-amino-acid polypeptide reads, in one-letter code: ESAT-6-like protein EsxK (98 aa).

This sequence belongs to the WXG100 family. CFP-10 subfamily. As to quaternary structure, strongly interacts with EsxL to form a heterodimeric complex under reducing conditions. The complex is regulated by the redox state of EsxL.

It localises to the secreted. The polypeptide is ESAT-6-like protein EsxK (Mycobacterium tuberculosis (strain ATCC 25618 / H37Rv)).